Reading from the N-terminus, the 133-residue chain is Large ribosomal subunit protein bL17 (133 aa).

The protein belongs to the bacterial ribosomal protein bL17 family. As to quaternary structure, part of the 50S ribosomal subunit. Contacts protein L32.

This is Large ribosomal subunit protein bL17 from Verminephrobacter eiseniae (strain EF01-2).